Here is a 280-residue protein sequence, read N- to C-terminus: Thiamine-phosphate synthase (280 aa).

The segment at 1-64 (MGWSGSPLTL…ATGRGGLRMT (64 aa)) is disordered. Residues 42 to 55 (GRGELRSRERRGEA) are compositionally biased toward basic and acidic residues. 4-amino-2-methyl-5-(diphosphooxymethyl)pyrimidine is bound by residues 104-108 (QLRCK) and N141. Mg(2+) is bound by residues D142 and D161. S179 contacts 4-amino-2-methyl-5-(diphosphooxymethyl)pyrimidine. 205 to 207 (TPT) is a 2-[(2R,5Z)-2-carboxy-4-methylthiazol-5(2H)-ylidene]ethyl phosphate binding site. 4-amino-2-methyl-5-(diphosphooxymethyl)pyrimidine is bound at residue K208. G236 is a 2-[(2R,5Z)-2-carboxy-4-methylthiazol-5(2H)-ylidene]ethyl phosphate binding site.

The protein belongs to the thiamine-phosphate synthase family. Requires Mg(2+) as cofactor.

The enzyme catalyses 2-[(2R,5Z)-2-carboxy-4-methylthiazol-5(2H)-ylidene]ethyl phosphate + 4-amino-2-methyl-5-(diphosphooxymethyl)pyrimidine + 2 H(+) = thiamine phosphate + CO2 + diphosphate. It carries out the reaction 2-(2-carboxy-4-methylthiazol-5-yl)ethyl phosphate + 4-amino-2-methyl-5-(diphosphooxymethyl)pyrimidine + 2 H(+) = thiamine phosphate + CO2 + diphosphate. It catalyses the reaction 4-methyl-5-(2-phosphooxyethyl)-thiazole + 4-amino-2-methyl-5-(diphosphooxymethyl)pyrimidine + H(+) = thiamine phosphate + diphosphate. The protein operates within cofactor biosynthesis; thiamine diphosphate biosynthesis; thiamine phosphate from 4-amino-2-methyl-5-diphosphomethylpyrimidine and 4-methyl-5-(2-phosphoethyl)-thiazole: step 1/1. Condenses 4-methyl-5-(beta-hydroxyethyl)thiazole monophosphate (THZ-P) and 2-methyl-4-amino-5-hydroxymethyl pyrimidine pyrophosphate (HMP-PP) to form thiamine monophosphate (TMP). The sequence is that of Thiamine-phosphate synthase from Deinococcus radiodurans (strain ATCC 13939 / DSM 20539 / JCM 16871 / CCUG 27074 / LMG 4051 / NBRC 15346 / NCIMB 9279 / VKM B-1422 / R1).